We begin with the raw amino-acid sequence, 318 residues long: Protease HtpX homolog (318 aa).

2 helical membrane-spanning segments follow: residues 6 to 26 (TAMLLAFMTALFMFVGFLIGG) and 28 to 48 (GGMMIAFLIAAGMNFFSYWNS). His130 is a Zn(2+) binding site. Glu131 is a catalytic residue. Residue His134 participates in Zn(2+) binding. A run of 2 helical transmembrane segments spans residues 145 to 165 (ITATLAGAISMLGNFAFFFGG) and 173 to 193 (PLGFVGVLVAMIVAPLAAMLV). Glu202 is a Zn(2+) binding site. The disordered stretch occupies residues 284 to 318 (NVSTGPVRAVNPTRKSRSVPNTGRGGSQPPRGPWS).

This sequence belongs to the peptidase M48B family. The cofactor is Zn(2+).

Its subcellular location is the cell inner membrane. In Rhizobium etli (strain ATCC 51251 / DSM 11541 / JCM 21823 / NBRC 15573 / CFN 42), this protein is Protease HtpX homolog.